The chain runs to 569 residues: Glucose-6-phosphate isomerase, cytosolic 2A (569 aa).

Catalysis depends on glutamate 360, which acts as the Proton donor. Residues histidine 391 and lysine 516 contribute to the active site.

This sequence belongs to the GPI family. As to quaternary structure, homodimer.

It is found in the cytoplasm. It catalyses the reaction alpha-D-glucose 6-phosphate = beta-D-fructose 6-phosphate. It functions in the pathway carbohydrate degradation; glycolysis; D-glyceraldehyde 3-phosphate and glycerone phosphate from D-glucose: step 2/4. This chain is Glucose-6-phosphate isomerase, cytosolic 2A (PGIC2-A), found in Clarkia lewisii (Farewell-to-spring).